Here is a 274-residue protein sequence, read N- to C-terminus: Prolyl 4-hydroxylase 13 (274 aa).

The Cytoplasmic segment spans residues 1 to 10 (MRSYGKEKKL). The chain crosses the membrane as a helical; Signal-anchor for type II membrane protein span at residues 11-31 (VFPYVFIACCFFLAIFGFCFF). Over 32-274 (NLFSQGISFS…TKWIRDQTYD (243 aa)) the chain is Lumenal. In terms of domain architecture, Fe2OG dioxygenase spans 151-270 (YYESFNILRY…KWVATKWIRD (120 aa)). Residues histidine 169 and aspartate 171 each contribute to the Fe cation site. N-linked (GlcNAc...) asparagine glycosylation is present at asparagine 242. Histidine 251 is a Fe cation binding site. Lysine 261 contributes to the 2-oxoglutarate binding site.

The protein belongs to the P4HA family. The cofactor is Fe(2+). It depends on L-ascorbate as a cofactor. In terms of tissue distribution, expressed in epidermal root hair cells (trichoblasts) root hairless cells (atrichoblasts).

The protein localises to the endoplasmic reticulum membrane. It catalyses the reaction L-prolyl-[collagen] + 2-oxoglutarate + O2 = trans-4-hydroxy-L-prolyl-[collagen] + succinate + CO2. Functionally, catalyzes the post-translational formation of 4-hydroxyproline in -Xaa-Pro-Gly- sequences in proline-rich peptide sequences of plant glycoproteins and other proteins. Hydroxyprolines are important constituent of many plant cell wall glycoproteins such as extensins, hydroxyproline-rich glycoproteins, lectins and arabinogalactan proteins. Possesses high affinity for leucine-rich repeat and proline-rich extensins of root cell walls that are essential for root hair development. Hydroxyprolines define the subsequent O-glycosylation sites by arabinosyltransferases which elongate the O-arabinosides on extensins. In Arabidopsis thaliana (Mouse-ear cress), this protein is Prolyl 4-hydroxylase 13.